The primary structure comprises 145 residues: Hemoglobin subunit beta (145 aa).

Positions 1–145 constitute a Globin domain; that stretch reads MLTAEEKAAV…VANALAHRYH (145 aa). At Thr11 the chain carries Phosphothreonine. Position 43 is a phosphoserine (Ser43). Lys58 is modified (N6-acetyllysine). Residue His62 participates in heme b binding. Lys81 carries the post-translational modification N6-acetyllysine. His91 provides a ligand contact to heme b. Cys92 is modified (S-nitrosocysteine).

Belongs to the globin family. As to quaternary structure, heterotetramer of two alpha chains and two beta chains. As to expression, red blood cells.

Functionally, involved in oxygen transport from the lung to the various peripheral tissues. In Bos gaurus frontalis (Domestic gayal), this protein is Hemoglobin subunit beta (HBB).